Consider the following 313-residue polypeptide: L-lactate dehydrogenase 1 (313 aa).

NAD(+) contacts are provided by residues Val-15, Asp-36, Lys-41, Tyr-66, and 80–81; that span reads GA. Residues Gln-83 and Arg-89 each coordinate substrate. NAD(+)-binding positions include Ser-102, 119-121, and Ser-144; that span reads VSN. 121–124 serves as a coordination point for substrate; it reads NPVD. 149–152 is a binding site for substrate; that stretch reads DTSR. Beta-D-fructose 1,6-bisphosphate is bound by residues Arg-154 and His-169. The active-site Proton acceptor is His-176. Tyr-222 carries the phosphotyrosine modification. Thr-231 lines the substrate pocket.

This sequence belongs to the LDH/MDH superfamily. LDH family. Homotetramer.

Its subcellular location is the cytoplasm. The enzyme catalyses (S)-lactate + NAD(+) = pyruvate + NADH + H(+). It functions in the pathway fermentation; pyruvate fermentation to lactate; (S)-lactate from pyruvate: step 1/1. With respect to regulation, allosterically activated by fructose 1,6-bisphosphate (FBP). Catalyzes the conversion of lactate to pyruvate. The protein is L-lactate dehydrogenase 1 of Clostridium acetobutylicum (strain ATCC 824 / DSM 792 / JCM 1419 / IAM 19013 / LMG 5710 / NBRC 13948 / NRRL B-527 / VKM B-1787 / 2291 / W).